The primary structure comprises 149 residues: Gamma-glutamylaminecyclotransferase (149 aa).

Position 7-10 (7-10) interacts with substrate; it reads YGTL. Glu82 acts as the Proton acceptor in catalysis.

This sequence belongs to the gamma-glutamylcyclotransferase family. As to quaternary structure, monomer.

The catalysed reaction is epsilon-(gamma-L-glutamyl)-L-lysine = 5-oxo-L-proline + L-lysine. In terms of biological role, contributes to degradation of proteins cross-linked by transglutaminases by degrading the cross-link between a lysine and a glutamic acid residue. Catalyzes the formation of 5-oxo-L-proline from L-gamma-glutamyl-L-epsilon-lysine. Inactive with L-gamma-glutamyl-alpha-amino acid substrates such as L-gamma-glutamyl-L-alpha-cysteine and L-gamma-glutamyl-L-alpha-alanine. The polypeptide is Gamma-glutamylaminecyclotransferase (Ggact) (Mus musculus (Mouse)).